Consider the following 214-residue polypeptide: Large ribosomal subunit protein uL3 (214 aa).

Glutamine 153 carries the N5-methylglutamine modification.

Belongs to the universal ribosomal protein uL3 family. As to quaternary structure, part of the 50S ribosomal subunit. Forms a cluster with proteins L14 and L19. Methylated by PrmB.

Functionally, one of the primary rRNA binding proteins, it binds directly near the 3'-end of the 23S rRNA, where it nucleates assembly of the 50S subunit. The polypeptide is Large ribosomal subunit protein uL3 (Aromatoleum aromaticum (strain DSM 19018 / LMG 30748 / EbN1) (Azoarcus sp. (strain EbN1))).